The sequence spans 160 residues: Nucleotide-binding protein CbuK_1936 (160 aa).

Belongs to the YajQ family.

Its function is as follows. Nucleotide-binding protein. The chain is Nucleotide-binding protein CbuK_1936 from Coxiella burnetii (strain CbuK_Q154) (Coxiella burnetii (strain Q154)).